Consider the following 108-residue polypeptide: Circadian clock oscillator protein KaiB (108 aa).

This sequence belongs to the KaiB family. As to quaternary structure, homodimer, interacts with KaiC. The KaiABC complex composition changes during the circadian cycle to control KaiC phosphorylation. Complexes KaiC(6), KaiA(2-4):KaiC(6), KaiB(6):KaiC(6) and KaiC(6):KaiB(6):KaiA(12) are among the most important forms, many form cooperatively. Undergoes a major conformational rearrangment; in the free state forms homotetramers as a dimer of dimers. When bound to the CI domain of KaiC switches to a monomeric thioredoxin-fold (KaiB(fs)). KaiB(fs) binds CikA, leading it to dephosphorylate phospho-RpaA.

In terms of biological role, key component of the KaiABC oscillator complex, which constitutes the main circadian regulator in cyanobacteria. Complex composition changes during the circadian cycle to control KaiC phosphorylation. KaiA stimulates KaiC autophosphorylation, while KaiB sequesters KaiA, leading to KaiC autodephosphorylation. Phospho-Ser-431 KaiC accumulation triggers binding of KaiB to form the KaiB(6):KaiC(6) complex, leading to changes in output regulators CikA and SasA. KaiB switches to a thioredoxin-like fold (KaiB(fs)) when bound to KaiC. KaiB(6):KaiC(6) formation exposes a site for KaiA binding that sequesters KaiA from KaiC, making the KaiC(6):KaiB(6):KaiA(12) complex that results in KaiC autodephosphorylation. Functionally, a metamorphic protein which reversibly switches between an inactive tetrameric fold and a rare, thioredoxin-like monomeric fold (KaiB(fs)). KaiB(fs) binds phospho-KaiC, KaiA and CikA. KaiA and CikA compete for binding to KaiB(fs), and KaiB(fs) and SasA compete for binding to KaiC, thus the clock oscillator and output signal pathway are tightly coupled. The sequence is that of Circadian clock oscillator protein KaiB from Nostoc sp. (strain PCC 7120 / SAG 25.82 / UTEX 2576).